An 888-amino-acid chain; its full sequence is ETO1-like protein 1 (888 aa).

One can recognise a BTB domain in the interval 180-280; the sequence is KNVVFKIGEE…ACDRELASLI (101 aa). 5 TPR repeats span residues 381 to 414, 441 to 477, 511 to 544, 637 to 670, and 711 to 744; these read VLGF…GHVY, SSVS…DPTL, LECL…CPDY, HERL…KRSF, and GQAL…RHTR. Residues 755–793 adopt a coiled-coil conformation; sequence LRNDKAAAYEEMTRLIEKAQNNASAYEKRSEYCDRELAK. TPR repeat units follow at residues 807-840 and 842-873; these read VYPY…KADL and LLHL…DPNH.

Belongs to the ETO1 family. As to quaternary structure, interacts with the C-terminal domain of ACS4, ACS5 and ACS9. In terms of tissue distribution, predominantly expressed in flowers.

It functions in the pathway protein modification; protein ubiquitination. Possible regulator of the ethylene pathway, which acts by regulating the stability of 1-aminocyclopropane-1-carboxylate synthase (ACS) enzymes. May act as a substrate-specific adapter that connects ACS enzymes, such as ACS5, to ubiquitin ligase complexes, leading to proteasomal degradation of ACS enzymes. In Arabidopsis thaliana (Mouse-ear cress), this protein is ETO1-like protein 1 (EOL1).